Here is a 223-residue protein sequence, read N- to C-terminus: Uridylate kinase (223 aa).

9 to 10 (GS) is a binding site for ATP. Position 42 (glycine 42) interacts with UMP. ATP contacts are provided by glycine 43 and arginine 47. Residues aspartate 64 and 112–118 (VSPGQTT) contribute to the UMP site. Residues threonine 138, tyrosine 144, and aspartate 147 each contribute to the ATP site.

The protein belongs to the UMP kinase family. Homohexamer.

Its subcellular location is the cytoplasm. It carries out the reaction UMP + ATP = UDP + ADP. The protein operates within pyrimidine metabolism; CTP biosynthesis via de novo pathway; UDP from UMP (UMPK route): step 1/1. With respect to regulation, inhibited by UTP. In terms of biological role, catalyzes the reversible phosphorylation of UMP to UDP. In Methanothrix thermoacetophila (strain DSM 6194 / JCM 14653 / NBRC 101360 / PT) (Methanosaeta thermophila), this protein is Uridylate kinase.